The following is a 397-amino-acid chain: 1-deoxy-D-xylulose 5-phosphate reductoisomerase (397 aa).

Residues Thr17, Gly18, Ser19, Ile20, Asn47, and Asn130 each coordinate NADPH. Position 131 (Lys131) interacts with 1-deoxy-D-xylulose 5-phosphate. Glu132 contacts NADPH. Asp156 is a binding site for Mn(2+). Positions 157, 158, 182, and 205 each coordinate 1-deoxy-D-xylulose 5-phosphate. A Mn(2+)-binding site is contributed by Glu158. NADPH is bound at residue Gly211. Positions 218, 223, 224, and 227 each coordinate 1-deoxy-D-xylulose 5-phosphate. Glu227 is a binding site for Mn(2+).

The protein belongs to the DXR family. Mg(2+) is required as a cofactor. Requires Mn(2+) as cofactor.

The catalysed reaction is 2-C-methyl-D-erythritol 4-phosphate + NADP(+) = 1-deoxy-D-xylulose 5-phosphate + NADPH + H(+). It functions in the pathway isoprenoid biosynthesis; isopentenyl diphosphate biosynthesis via DXP pathway; isopentenyl diphosphate from 1-deoxy-D-xylulose 5-phosphate: step 1/6. Functionally, catalyzes the NADPH-dependent rearrangement and reduction of 1-deoxy-D-xylulose-5-phosphate (DXP) to 2-C-methyl-D-erythritol 4-phosphate (MEP). The protein is 1-deoxy-D-xylulose 5-phosphate reductoisomerase of Rhizobium rhizogenes (strain K84 / ATCC BAA-868) (Agrobacterium radiobacter).